A 369-amino-acid chain; its full sequence is GDSL esterase/lipase At5g42170 (369 aa).

A signal peptide spans 1 to 16 (MSRLVYVIFLLVVVEG). N-linked (GlcNAc...) asparagine glycosylation is found at Asn-28 and Asn-45. The Nucleophile role is filled by Ser-57. Residues Asn-203 and Asn-336 are each glycosylated (N-linked (GlcNAc...) asparagine). Active-site residues include Asp-344 and His-347.

Belongs to the 'GDSL' lipolytic enzyme family.

It is found in the secreted. The protein is GDSL esterase/lipase At5g42170 of Arabidopsis thaliana (Mouse-ear cress).